The primary structure comprises 261 residues: Putative glyoxylase CFP32 (261 aa).

VOC domains lie at 11-129 (TPNW…LWQA) and 143-257 (TLIW…VLKP). 2 glyoxalase regions span residues 13-123 (NWVD…TGAA) and 149-252 (LLTD…GAIF).

The polypeptide is Putative glyoxylase CFP32 (Mycobacterium bovis (strain ATCC BAA-935 / AF2122/97)).